The following is a 346-amino-acid chain: DNA primase small subunit PriS (346 aa).

Catalysis depends on residues Asp97, Asp99, and Asp278.

The protein belongs to the eukaryotic-type primase small subunit family. Heterodimer of a small subunit (PriS) and a large subunit (PriL). It depends on Mg(2+) as a cofactor. Mn(2+) serves as cofactor.

Catalytic subunit of DNA primase, an RNA polymerase that catalyzes the synthesis of short RNA molecules used as primers for DNA polymerase during DNA replication. The small subunit contains the primase catalytic core and has DNA synthesis activity on its own. Binding to the large subunit stabilizes and modulates the activity, increasing the rate of DNA synthesis while decreasing the length of the DNA fragments, and conferring RNA synthesis capability. The DNA polymerase activity may enable DNA primase to also catalyze primer extension after primer synthesis. May also play a role in DNA repair. In Thermococcus onnurineus (strain NA1), this protein is DNA primase small subunit PriS.